Consider the following 188-residue polypeptide: Large ribosomal subunit protein eL18 (188 aa).

The interval 143–188 (RSAREAEKHFGPAPGVPHSHTKPHVRSKGRKFERARGRRASRAYKN) is disordered. Basic residues-rich tracts occupy residues 161–171 (SHTKPHVRSKG) and 178–188 (RGRRASRAYKN).

It belongs to the eukaryotic ribosomal protein eL18 family.

Its subcellular location is the cytoplasm. The polypeptide is Large ribosomal subunit protein eL18 (rpl-18) (Caenorhabditis briggsae).